The sequence spans 708 residues: Homeobox-leucine zipper protein HDG10 (708 aa).

Residues Met1–Ser24 form a disordered region. The homeobox DNA-binding region spans Asp16 to Asn75. The stretch at Leu119–Ser141 forms a coiled coil. The interval Gly162–Ser188 is disordered. A compositionally biased stretch (polar residues) spans Thr165–Ser188. The START domain occupies Ser218–Leu456.

This sequence belongs to the HD-ZIP homeobox family. Class IV subfamily. As to quaternary structure, interacts with ANT, BBM and AIL1. As to expression, expressed in exclusively in anthers with highest levels in the tapetum and pollen grains.

It localises to the nucleus. Probable transcription factor. This is Homeobox-leucine zipper protein HDG10 from Arabidopsis thaliana (Mouse-ear cress).